The sequence spans 278 residues: Splicing factor YJU2 (278 aa).

Zn(2+) contacts are provided by C51, C54, C88, and C91. The segment at H228–K278 is disordered. Short sequence motifs (nuclear localization signal) lie at residues K242–K258 and S260–K278.

The protein belongs to the CWC16 family. YJU2 subfamily. As to quaternary structure, component of the spliceosome. Present in the activated B complex, the catalytically activated B* complex which catalyzes the branching, the catalytic step 1 C complex catalyzing the exon ligation, and the postcatalytic P complex containing the ligated exons (mRNA) and the excised lariat intron. Interacts (via C-terminus) with CLF1. Interacts (via N-terminus) with SYF1. Interacts with U2 snRNA; this interaction is direct. Identified in the CWC complex (or CEF1-associated complex), a spliceosome sub-complex reminiscent of a late-stage spliceosome composed of the U2, U5 and U6 snRNAs and at least BUD13, BUD31, BRR2, CDC40, CEF1, CLF1, CUS1, CWC2, CWC15, CWC21, CWC22, CWC23, CWC24, CWC25, CWC27, ECM2, HSH155, IST3, ISY1, LEA1, MSL1, NTC20, PRP8, PRP9, PRP11, PRP19, PRP21, PRP22, PRP45, PRP46, SLU7, SMB1, SMD1, SMD2, SMD3, SMX2, SMX3, SNT309, SNU114, SPP2, SYF1, SYF2, RSE1 and YJU2.

The protein resides in the nucleus. In terms of biological role, part of the spliceosome which catalyzes two sequential transesterification reactions, first the excision of the non-coding intron from pre-mRNA and then the ligation of the coding exons to form the mature mRNA. Plays a role (via N-terminus) in stabilizing the structure of the spliceosome catalytic core and docking of the branch helix into the active site, producing 5'-exon and lariat intron-3'-intermediates. Further stabilizes spliceosome conformation for 3'-splice site docking (via C-terminus) promoting exon ligation. This Saccharomyces cerevisiae (strain ATCC 204508 / S288c) (Baker's yeast) protein is Splicing factor YJU2.